The chain runs to 213 residues: Thymidylate kinase (213 aa).

9 to 16 (GVEGCGKT) contributes to the ATP binding site.

It belongs to the thymidylate kinase family.

The enzyme catalyses dTMP + ATP = dTDP + ADP. In terms of biological role, phosphorylation of dTMP to form dTDP in both de novo and salvage pathways of dTTP synthesis. The protein is Thymidylate kinase of Geotalea uraniireducens (strain Rf4) (Geobacter uraniireducens).